Reading from the N-terminus, the 130-residue chain is MKKVNYFGTGRRKSSVARVILTNGTGKITINTRDFEKYLPLPATRLEMIQPLELTEKREVFDVSVNVNGGGLSAQAGAIRLGIARALIESIPELRAILKKSGLLTRDARCVERKKYGLKKARRAPQFSKR.

This sequence belongs to the universal ribosomal protein uS9 family.

The protein is Small ribosomal subunit protein uS9 of Aster yellows witches'-broom phytoplasma (strain AYWB).